The following is a 41-amino-acid chain: MKDFLTYLSTAPVITAIWLGITAGILIEFNRFFPDLLFHPL.

Residues 7 to 27 (YLSTAPVITAIWLGITAGILI) form a helical membrane-spanning segment.

The protein belongs to the PsaJ family.

The protein localises to the cellular thylakoid membrane. Its function is as follows. May help in the organization of the PsaE and PsaF subunits. This is Photosystem I reaction center subunit IX from Cyanothece sp. (strain PCC 7425 / ATCC 29141).